A 204-amino-acid polypeptide reads, in one-letter code: uncharacterized protein (204 aa).

The signal sequence occupies residues 1–17 (MKRLVTGLLALSLFLAA). The segment at 17-102 (ACGQDSDQQK…NQSSNNQKSS (86 aa)) is disordered. Residue cysteine 18 is the site of N-palmitoyl cysteine attachment. Cysteine 18 carries S-diacylglycerol cysteine lipidation. Residues 23–70 (DQQKDSNKEKDDKAKTEQQDKKTNDSSKDKKDNKDDSKDVNKDNKDNS) are compositionally biased toward basic and acidic residues. Over residues 71 to 102 (ANDNQQQSNSNATNNDQNQTNNNQSSNNQKSS) the composition is skewed to low complexity.

The protein resides in the cell membrane. This is an uncharacterized protein from Staphylococcus aureus (strain Mu50 / ATCC 700699).